The primary structure comprises 219 residues: Octanoyltransferase (219 aa).

Residues 32 to 207 enclose the BPL/LPL catalytic domain; the sequence is ASSPDQLWIV…TFSHNLGYQN (176 aa). Substrate-binding positions include 71–78, 138–140, and 151–153; these read RGGQVTYH, SLG, and GLA. The active-site Acyl-thioester intermediate is cysteine 169.

The protein belongs to the LipB family.

Its subcellular location is the cytoplasm. The catalysed reaction is octanoyl-[ACP] + L-lysyl-[protein] = N(6)-octanoyl-L-lysyl-[protein] + holo-[ACP] + H(+). It functions in the pathway protein modification; protein lipoylation via endogenous pathway; protein N(6)-(lipoyl)lysine from octanoyl-[acyl-carrier-protein]: step 1/2. Functionally, catalyzes the transfer of endogenously produced octanoic acid from octanoyl-acyl-carrier-protein onto the lipoyl domains of lipoate-dependent enzymes. Lipoyl-ACP can also act as a substrate although octanoyl-ACP is likely to be the physiological substrate. In Shewanella sediminis (strain HAW-EB3), this protein is Octanoyltransferase.